A 90-amino-acid chain; its full sequence is Bombyxin B-7 (90 aa).

The first 20 residues, 1–20 (MMKTSVMLMLVVVISLMCSG), serve as a signal peptide directing secretion. 3 disulfide bridges follow: Cys30–Cys76, Cys42–Cys89, and Cys75–Cys80. Residues 49–67 (GGAQYAPYFWTRQYLGSRG) constitute a propeptide, c peptide like.

It belongs to the insulin family. Heterodimer of a B chain and an A chain linked by two disulfide bonds.

It is found in the secreted. In terms of biological role, brain peptide responsible for activation of prothoracic glands to produce ecdysone in insects. This chain is Bombyxin B-7 (BBXB7), found in Bombyx mori (Silk moth).